The sequence spans 610 residues: Manganese lipoxygenase (610 aa).

An N-terminal signal peptide occupies residues 1–16 (MVALLIFLGIFTCVET). One can recognise a Lipoxygenase domain in the interval 47–610 (FTLPNEDDEI…PGVIPFYLSV (564 aa)). N-linked (GlcNAc...) asparagine glycosylation is found at Asn157 and Asn259. Residues His290 and His295 each contribute to the Mn(2+) site. Residue Asn386 is glycosylated (N-linked (GlcNAc...) asparagine). Mn(2+)-binding residues include His475 and Asn479. A glycan (N-linked (GlcNAc...) asparagine) is linked at Asn540. Val610 provides a ligand contact to Mn(2+).

Belongs to the lipoxygenase family. Manganese lipoxygenase subfamily. It depends on Mn(2+) as a cofactor. N- and O-glycosylated.

The protein resides in the secreted. The enzyme catalyses (9Z,12Z)-octadecadienoate + O2 = (11S)-hydroperoxy-(9Z,12Z)-octadecadienoate. It catalyses the reaction (9Z,12Z)-octadecadienoate + O2 = (11R)-hydroperoxy-(9Z,12Z)-octadecadienoate. It carries out the reaction (9Z,12Z)-octadecadienoate + O2 = (13S)-hydroperoxy-(9Z,11E)-octadecadienoate. The catalysed reaction is (9Z,12Z,15Z)-octadecatrienoate + O2 = (11S)-hydroperoxy-(9Z,12Z,15Z)-octadecatrienoate. In terms of biological role, lipoxygenase that metabolizes linoleic and alpha-linolenic acids to 9-, 11- and 13-hydroperoxy fatty acids. Oxidizes linoleic acid to mainly 11R-, 13S- and racemic 9-HPODE, and alpha-linolenic acid to 11-HPOTrE. This Fusarium oxysporum (strain Fo5176) (Fusarium vascular wilt) protein is Manganese lipoxygenase.